We begin with the raw amino-acid sequence, 376 residues long: MKIKKIKLLKALALTGAFGIVATVPVIVYSCSSTDNNGGTGDNNTGGGGSGTDQQQGTTYTPAIKSDVTLSGALSKIYDTTNTGDSRKNTNTLIAEDIKANPENYFTNGEDLKKVEGWSVTVDGSFDSNSVWTGDAYSKWSAVADTHKGVYKSTSKQLNINSLKDLKSQLDTSAKIKAICDESNLVFSTADADSYKIQNELGFTGGDLLHINVTATQAGKTLNMDLGIPVSDLNLKITDLKVSVTASNNSTGNNVAAVSDLTTNFTYNIGIKEEVTAPTEKPNLAKTDKGEVMKVLKALGYTQTGDETKLDNDKVSNSLGLYNCEFTAVSATPVEGSEDKFTIKLKAKPLTDYVWEDGTNTEKEISFEATFTMTGN.

Positions 1–30 (MKIKKIKLLKALALTGAFGIVATVPVIVYS) are cleaved as a signal peptide. Cysteine 31 carries the N-palmitoyl cysteine lipid modification. Cysteine 31 carries the S-diacylglycerol cysteine lipid modification. The segment at 35-59 (DNNGGTGDNNTGGGGSGTDQQQGTT) is disordered. Residues 38–51 (GGTGDNNTGGGGSG) show a composition bias toward gly residues.

This sequence belongs to the p35 lipoprotein family.

The protein resides in the cell membrane. In Malacoplasma penetrans (Mycoplasma penetrans), this protein is Lipoprotein p33.